A 285-amino-acid polypeptide reads, in one-letter code: Polyamine aminopropyltransferase (285 aa).

A PABS domain is found at 2 to 237; the sequence is EFWFSELHSP…GYWLFGFASK (236 aa). Gln31 contacts S-methyl-5'-thioadenosine. Asp86 contacts spermidine. S-methyl-5'-thioadenosine-binding positions include Glu106 and 137 to 138; that span reads DA. Asp155 (proton acceptor) is an active-site residue.

This sequence belongs to the spermidine/spermine synthase family. Homodimer or homotetramer.

It localises to the cytoplasm. It carries out the reaction S-adenosyl 3-(methylsulfanyl)propylamine + putrescine = S-methyl-5'-thioadenosine + spermidine + H(+). The protein operates within amine and polyamine biosynthesis; spermidine biosynthesis; spermidine from putrescine: step 1/1. Its function is as follows. Catalyzes the irreversible transfer of a propylamine group from the amino donor S-adenosylmethioninamine (decarboxy-AdoMet) to putrescine (1,4-diaminobutane) to yield spermidine. The polypeptide is Polyamine aminopropyltransferase (Lachnospira eligens (strain ATCC 27750 / DSM 3376 / VPI C15-48 / C15-B4) (Eubacterium eligens)).